A 448-amino-acid chain; its full sequence is Methionine aminopeptidase 2 (448 aa).

Positions 1–47 (MTSSVDKVSQKVADVKLGSSKSTKNNKSKGKGKSNKNQVVEDDDEDD) are disordered. Positions 24–34 (KNNKSKGKGKS) are enriched in basic residues. Position 198 (His-198) interacts with substrate. Residues Asp-218, Asp-229, and His-298 each contribute to the a divalent metal cation site. His-306 contacts substrate. Residues Glu-331 and Glu-429 each coordinate a divalent metal cation.

It belongs to the peptidase M24A family. Methionine aminopeptidase eukaryotic type 2 subfamily. Co(2+) serves as cofactor. It depends on Zn(2+) as a cofactor. Mn(2+) is required as a cofactor. Requires Fe(2+) as cofactor.

The protein resides in the cytoplasm. The enzyme catalyses Release of N-terminal amino acids, preferentially methionine, from peptides and arylamides.. In terms of biological role, cotranslationally removes the N-terminal methionine from nascent proteins. The N-terminal methionine is often cleaved when the second residue in the primary sequence is small and uncharged (Met-Ala-, Cys, Gly, Pro, Ser, Thr, or Val). This Komagataella phaffii (strain GS115 / ATCC 20864) (Yeast) protein is Methionine aminopeptidase 2.